Here is a 174-residue protein sequence, read N- to C-terminus: 3-hydroxyanthranilate 3,4-dioxygenase (174 aa).

Arginine 47 is a binding site for O2. The Fe cation site is built by histidine 51, glutamate 57, and histidine 95. Substrate is bound at residue glutamate 57. 2 residues coordinate substrate: arginine 99 and glutamate 110. Residues cysteine 125, cysteine 128, cysteine 162, and cysteine 165 each coordinate Fe cation.

It belongs to the 3-HAO family. As to quaternary structure, homodimer. The cofactor is Fe(2+).

It catalyses the reaction 3-hydroxyanthranilate + O2 = (2Z,4Z)-2-amino-3-carboxymuconate 6-semialdehyde. It participates in cofactor biosynthesis; NAD(+) biosynthesis; quinolinate from L-kynurenine: step 3/3. Functionally, catalyzes the oxidative ring opening of 3-hydroxyanthranilate to 2-amino-3-carboxymuconate semialdehyde, which spontaneously cyclizes to quinolinate. The sequence is that of 3-hydroxyanthranilate 3,4-dioxygenase from Burkholderia lata (strain ATCC 17760 / DSM 23089 / LMG 22485 / NCIMB 9086 / R18194 / 383).